The following is a 461-amino-acid chain: Bifunctional protein GlmU (461 aa).

Residues Met-1 to Arg-229 are pyrophosphorylase. UDP-N-acetyl-alpha-D-glucosamine contacts are provided by residues Leu-8–Gly-11, Lys-22, Gln-72, and Gly-77–Thr-78. Asp-102 contacts Mg(2+). UDP-N-acetyl-alpha-D-glucosamine-binding residues include Gly-139, Glu-154, Asn-169, and Asn-227. Asn-227 serves as a coordination point for Mg(2+). The segment at Ile-230 to Asn-250 is linker. An N-acetyltransferase region spans residues Gly-251–Glu-461. 2 residues coordinate UDP-N-acetyl-alpha-D-glucosamine: Arg-332 and Lys-350. The active-site Proton acceptor is the His-362. UDP-N-acetyl-alpha-D-glucosamine contacts are provided by Tyr-365 and Asn-376. Residues Asn-385–Tyr-386, Ala-422, and Arg-439 contribute to the acetyl-CoA site.

It in the N-terminal section; belongs to the N-acetylglucosamine-1-phosphate uridyltransferase family. This sequence in the C-terminal section; belongs to the transferase hexapeptide repeat family. In terms of assembly, homotrimer. Mg(2+) serves as cofactor.

The protein resides in the cytoplasm. The catalysed reaction is alpha-D-glucosamine 1-phosphate + acetyl-CoA = N-acetyl-alpha-D-glucosamine 1-phosphate + CoA + H(+). It carries out the reaction N-acetyl-alpha-D-glucosamine 1-phosphate + UTP + H(+) = UDP-N-acetyl-alpha-D-glucosamine + diphosphate. Its pathway is nucleotide-sugar biosynthesis; UDP-N-acetyl-alpha-D-glucosamine biosynthesis; N-acetyl-alpha-D-glucosamine 1-phosphate from alpha-D-glucosamine 6-phosphate (route II): step 2/2. It functions in the pathway nucleotide-sugar biosynthesis; UDP-N-acetyl-alpha-D-glucosamine biosynthesis; UDP-N-acetyl-alpha-D-glucosamine from N-acetyl-alpha-D-glucosamine 1-phosphate: step 1/1. It participates in bacterial outer membrane biogenesis; LPS lipid A biosynthesis. In terms of biological role, catalyzes the last two sequential reactions in the de novo biosynthetic pathway for UDP-N-acetylglucosamine (UDP-GlcNAc). The C-terminal domain catalyzes the transfer of acetyl group from acetyl coenzyme A to glucosamine-1-phosphate (GlcN-1-P) to produce N-acetylglucosamine-1-phosphate (GlcNAc-1-P), which is converted into UDP-GlcNAc by the transfer of uridine 5-monophosphate (from uridine 5-triphosphate), a reaction catalyzed by the N-terminal domain. This chain is Bifunctional protein GlmU, found in Lactobacillus johnsonii (strain CNCM I-12250 / La1 / NCC 533).